Consider the following 204-residue polypeptide: Lymphotoxin-alpha (204 aa).

The first 33 residues, 1–33, serve as a signal peptide directing secretion; sequence MTPPGRLYLRRVCSTPILLLLGLLLALPPEAQG. The region spanning 62 to 204 is the THD domain; sequence PAAHLVGDPS…SSVFFGAFAL (143 aa). A glycan (N-linked (GlcNAc...) asparagine) is linked at Asn-95. Residues Cys-119 and Cys-155 are joined by a disulfide bond.

This sequence belongs to the tumor necrosis factor family. As to quaternary structure, homotrimer, and heterotrimer of either two LTB and one LTA subunits or (less prevalent) two LTA and one LTB subunits. Interacts with TNFRSF14.

The protein localises to the secreted. It localises to the membrane. Its function is as follows. Cytokine that in its homotrimeric form binds to TNFRSF1A/TNFR1, TNFRSF1B/TNFBR and TNFRSF14/HVEM. In its heterotrimeric form with LTB binds to TNFRSF3/LTBR. Lymphotoxin is produced by lymphocytes and is cytotoxic for a wide range of tumor cells in vitro and in vivo. The chain is Lymphotoxin-alpha (LTA) from Sus scrofa (Pig).